The chain runs to 946 residues: MSDYKHTLNLPETDFPMRGMLPKREPGRVSQWQDMNLYQRLRDARAGREVFVLHDGPPYANGSIHIGHAVNKILKDIVVKSKSLAGYDAPYVPGWDCHGLPIEHKVETTHGKHLEADEARGLCREYAGAQIEGQKTDFVRLGVVGDWENPYRTMDFANEAGEIRALAKMVEGGYVFKGLKPVNWCFDCGSALAEAEVEYADKKSDAIDVAFAAAEPEALASAFGLASLDKPAAIVIWTTTPWTIPANQALNVHPDFTYALVDTGELLLVLAEELVESCLTRYGLEGDVVATAAGASLEFITFRHPFYERVAPVYLADYVTVEEGSTGIVHSAPSYGLDDFMTCREHGMSFDDMLNPVQGNGVYRDDLPLFGGQMIWKANPHIVDTLREVNALMAHTPITHSYMHCWRHKTPVIYRATAQWFVGMDREDDQGRTLRQRALDGVEATQFIPAWGKARLHSMIANRPDWCISRQRNWGVPIPFFMHKQTGEWHPRTVELMEDVARRVEAEGIDAWFRLDARELLGDEADQYDKVTDTLDVWFDSGTTHRHVMRGSHPMGHDQGPRADLYLEGSDQHRGWFHSSLLTGCAIDGHAPYKALLTHGFTVDEKGRKMSKSMGNVIAPQQVMDKLGADILRLWVASTDYSGEMAVSDEILKRTADVYRRIRNTSRFLLANLNGFAPERDAVAFEDMLALDQWVVDRAAQLQARIQGAYAEYRFRDVYQQVHDFCAHELGGFYLDVIKDRQYTTQADSRSRRSCQTALYHVVEALVRWVAPILSFTAEEIYEVIPGTRGDSVLLEEYYPHLATLEANAAMGREFWSRVLTVKQAVNKCLEDARNAKVVRNSLAAEVTLYADDSLRETLTQLGEELRFVLLTSEVHLASLEDAGSAQAEASELEGLKVAVVSSPHAKCERCWHHRADVGTHAADPNLCGRCLSNLPEGPGETRRYA.

The short motif at 58 to 68 is the 'HIGH' region element; the sequence is PYANGSIHIGH. E568 contributes to the L-isoleucyl-5'-AMP binding site. Residues 609-613 carry the 'KMSKS' region motif; the sequence is KMSKS. An ATP-binding site is contributed by K612. C908, C911, C928, and C931 together coordinate Zn(2+).

This sequence belongs to the class-I aminoacyl-tRNA synthetase family. IleS type 1 subfamily. Monomer. It depends on Zn(2+) as a cofactor.

The protein resides in the cytoplasm. It catalyses the reaction tRNA(Ile) + L-isoleucine + ATP = L-isoleucyl-tRNA(Ile) + AMP + diphosphate. Its function is as follows. Catalyzes the attachment of isoleucine to tRNA(Ile). As IleRS can inadvertently accommodate and process structurally similar amino acids such as valine, to avoid such errors it has two additional distinct tRNA(Ile)-dependent editing activities. One activity is designated as 'pretransfer' editing and involves the hydrolysis of activated Val-AMP. The other activity is designated 'posttransfer' editing and involves deacylation of mischarged Val-tRNA(Ile). The chain is Isoleucine--tRNA ligase from Chromohalobacter salexigens (strain ATCC BAA-138 / DSM 3043 / CIP 106854 / NCIMB 13768 / 1H11).